The sequence spans 164 residues: SsrA-binding protein (164 aa).

This sequence belongs to the SmpB family.

Its subcellular location is the cytoplasm. Functionally, required for rescue of stalled ribosomes mediated by trans-translation. Binds to transfer-messenger RNA (tmRNA), required for stable association of tmRNA with ribosomes. tmRNA and SmpB together mimic tRNA shape, replacing the anticodon stem-loop with SmpB. tmRNA is encoded by the ssrA gene; the 2 termini fold to resemble tRNA(Ala) and it encodes a 'tag peptide', a short internal open reading frame. During trans-translation Ala-aminoacylated tmRNA acts like a tRNA, entering the A-site of stalled ribosomes, displacing the stalled mRNA. The ribosome then switches to translate the ORF on the tmRNA; the nascent peptide is terminated with the 'tag peptide' encoded by the tmRNA and targeted for degradation. The ribosome is freed to recommence translation, which seems to be the essential function of trans-translation. The polypeptide is SsrA-binding protein (Shewanella sediminis (strain HAW-EB3)).